The sequence spans 639 residues: Probable methyltransferase PMT18 (639 aa).

Over 1 to 19 (MAKENSSHSLAEAKRKRLT) the chain is Cytoplasmic. A helical; Signal-anchor for type II membrane protein membrane pass occupies residues 20 to 42 (WILCVSGLCILSYVLGSWQTNTV). Positions 41–86 (TVPTSSSEAYSRMGCDETSTTTRAQTTQTQTNPSSDDTSSSLSSSE) are disordered. Topologically, residues 43-639 (PTSSSEAYSR…VKSYWTGPSS (597 aa)) are lumenal. A compositionally biased stretch (low complexity) spans 58–85 (TSTTTRAQTTQTQTNPSSDDTSSSLSSS). N-linked (GlcNAc...) asparagine glycosylation is found at N104 and N427.

It belongs to the methyltransferase superfamily.

It is found in the endoplasmic reticulum membrane. The sequence is that of Probable methyltransferase PMT18 from Arabidopsis thaliana (Mouse-ear cress).